A 299-amino-acid polypeptide reads, in one-letter code: ATP phosphoribosyltransferase (299 aa).

Belongs to the ATP phosphoribosyltransferase family. Long subfamily. As to quaternary structure, equilibrium between an active dimeric form, an inactive hexameric form and higher aggregates. Interconversion between the various forms is largely reversible and is influenced by the natural substrates and inhibitors of the enzyme. It depends on Mg(2+) as a cofactor.

It localises to the cytoplasm. It carries out the reaction 1-(5-phospho-beta-D-ribosyl)-ATP + diphosphate = 5-phospho-alpha-D-ribose 1-diphosphate + ATP. It participates in amino-acid biosynthesis; L-histidine biosynthesis; L-histidine from 5-phospho-alpha-D-ribose 1-diphosphate: step 1/9. Feedback inhibited by histidine. Functionally, catalyzes the condensation of ATP and 5-phosphoribose 1-diphosphate to form N'-(5'-phosphoribosyl)-ATP (PR-ATP). Has a crucial role in the pathway because the rate of histidine biosynthesis seems to be controlled primarily by regulation of HisG enzymatic activity. The chain is ATP phosphoribosyltransferase from Buchnera aphidicola subsp. Melaphis rhois.